Consider the following 461-residue polypeptide: Probable multidrug resistance protein NorM (461 aa).

A run of 12 helical transmembrane segments spans residues 17–37, 51–71, 98–118, 138–158, 165–185, 198–218, 243–263, 275–295, 320–340, 360–380, 398–418, and 424–444; these read FLKL…TGFV, AAGG…VGLI, LWIV…LNGV, VMAW…CIIA, IMLI…GLGF, LAIA…VYML, LLWV…LYLT, ILAA…VPLA, ALVS…ALLA, ALNV…LDGL, MVLG…LLGF, and GAGV…AYLW.

Belongs to the multi antimicrobial extrusion (MATE) (TC 2.A.66.1) family.

The protein resides in the cell inner membrane. Functionally, multidrug efflux pump. The polypeptide is Probable multidrug resistance protein NorM (norM) (Synechocystis sp. (strain ATCC 27184 / PCC 6803 / Kazusa)).